Here is a 295-residue protein sequence, read N- to C-terminus: MTARIIDGKTISAEVRARVAAEVTRLKTDHGITPGLAVVLVGNDPASEVYVRSKHKQTQEAGMASFEHRLPADVPQAELMALIAKLNADPAVHGILVQLPLPKGLDSNAVIDAIDPAKDVDGLNPTNAGRLASGLFALTPCTPLGSIIMAKTVHASLEGMNALVIGRSNLVGKPLVQLLLNENATVTIAHSRTRDLPALCRQADLVFAAVGKAEMVKGDWIKPGATVIDVGINRTPGKDGGKDKLLGDVAFAEAKEVAGAITPVPGGVGLMTVACLLVNTVRAACAIHGLPKPAV.

NADP(+) is bound by residues Gly-166–Ser-168, Ser-191, and Ile-232.

The protein belongs to the tetrahydrofolate dehydrogenase/cyclohydrolase family. As to quaternary structure, homodimer.

The enzyme catalyses (6R)-5,10-methylene-5,6,7,8-tetrahydrofolate + NADP(+) = (6R)-5,10-methenyltetrahydrofolate + NADPH. The catalysed reaction is (6R)-5,10-methenyltetrahydrofolate + H2O = (6R)-10-formyltetrahydrofolate + H(+). It participates in one-carbon metabolism; tetrahydrofolate interconversion. In terms of biological role, catalyzes the oxidation of 5,10-methylenetetrahydrofolate to 5,10-methenyltetrahydrofolate and then the hydrolysis of 5,10-methenyltetrahydrofolate to 10-formyltetrahydrofolate. This Rhodopseudomonas palustris (strain ATCC BAA-98 / CGA009) protein is Bifunctional protein FolD.